Here is a 215-residue protein sequence, read N- to C-terminus: Flagellin B1 (215 aa).

Positions Met1 to Gly12 are excised as a propeptide.

This sequence belongs to the archaeal flagellin family.

Its subcellular location is the archaeal flagellum. Functionally, flagellin is the subunit protein which polymerizes to form the filaments of archaeal flagella. The chain is Flagellin B1 (flaB1) from Methanococcus vannielii (strain ATCC 35089 / DSM 1224 / JCM 13029 / OCM 148 / SB).